The following is a 337-amino-acid chain: Sorting nexin-15 (337 aa).

Positions 1–130 constitute a PX domain; that stretch reads MSRQAKDDFL…EFFRGGEVTR (130 aa). The a 1,2-diacyl-sn-glycero-3-phospho-(1D-myo-inositol-3-phosphate) site is built by R51, S53, R87, and R96. R105 carries the omega-N-methylarginine modification. The disordered stretch occupies residues 133-156; that stretch reads EVSRDLRILPPPLIPTPPPDEARL. Pro residues predominate over residues 141–151; that stretch reads LPPPLIPTPPP. Phosphoserine is present on residues S201 and S227. The disordered stretch occupies residues 244–270; it reads LDQEPWEPGGQEEEEAEDGEPAPAYLG. Residues 253-263 show a composition bias toward acidic residues; sequence GQEEEEAEDGE. The 73-residue stretch at 265–337 folds into the MIT domain; that stretch reads APAYLGQATE…RAEMLHTHLP (73 aa).

Belongs to the sorting nexin family. As to quaternary structure, homodimer. Interacts with SNX1, SNX2 and SNX4.

It localises to the cytoplasm. The protein resides in the membrane. Its subcellular location is the cytoplasmic vesicle membrane. May be involved in several stages of intracellular trafficking. Overexpression of SNX15 disrupts the normal trafficking of proteins from the plasma membrane to recycling endosomes or the TGN. This Mus musculus (Mouse) protein is Sorting nexin-15 (Snx15).